Consider the following 267-residue polypeptide: Kallikrein-14 (267 aa).

The N-terminal stretch at 1–34 (MSLRVLGSGTWPSAPKMFLLLTALQVLAIAMTQS) is a signal peptide. Residues 35-40 (QEDENK) constitute a propeptide, activation peptide. The 225-residue stretch at 41–265 (IIGGHTCTRS…YRSWIEETMR (225 aa)) folds into the Peptidase S1 domain. Intrachain disulfides connect Cys47/Cys180, Cys68/Cys84, Cys159/Cys226, Cys191/Cys205, and Cys216/Cys241. Residues His83 and Asp127 each act as charge relay system in the active site. The Charge relay system role is filled by Ser220.

It belongs to the peptidase S1 family. Kallikrein subfamily. Proteolytic cleavage of the activation peptide produces the active enzyme. As to expression, highly expressed in CNS, bone marrow and fetal liver. Also expressed in breast, thyroid, kidney, colon, pancreas, spleen, prostate, uterus, small intestine, placenta and skeletal muscle. Among 40 tissues tested, the highest expression is detected in skin followed by breast and prostate (at protein level). Expressed in stratum corneum by sweat ducts and sweat glands and detected in sweat (at protein level).

It is found in the secreted. It localises to the extracellular space. Its activity is regulated as follows. Inhibited by SERPINA1, SERPINC1, SERPINE1, SERPINF2, aprotinin, soybean, trypsin inhibitor and leupeptin. Inhibited by serine protease inhibitor SPINK5. Has an autoproteolytic activity which may have a regulatory effect. Activated by citrate and inhibited by zinc and to a lower extent by manganese. Its function is as follows. Serine-type endopeptidase with a dual trypsin-like and chymotrypsin-like substrate specificity. May activate/inactivate the proteinase-activated receptors F2R, F2RL1 and F2RL3 and other kallikreins including KLK1, KLK3, KLK5 and KLK11. May function in seminal clot liquefaction through direct cleavage of the semenogelin SEMG1 and SEMG2 and activation of KLK3. May function through desmoglein DSG1 cleavage in epidermal desquamation a process by which the most superficial corneocytes are shed from the skin surface. May be involved in several aspects of tumor progression including growth, invasion and angiogenesis. The polypeptide is Kallikrein-14 (KLK14) (Homo sapiens (Human)).